The following is a 393-amino-acid chain: 8-amino-7-oxononanoate synthase (393 aa).

108 to 109 (GF) is a pyridoxal 5'-phosphate binding site. Position 133 (histidine 133) interacts with substrate. Pyridoxal 5'-phosphate is bound by residues serine 182, 207 to 210 (DDAH), and 238 to 241 (TLSK). Lysine 241 is subject to N6-(pyridoxal phosphate)lysine. Threonine 355 contributes to the substrate binding site.

It belongs to the class-II pyridoxal-phosphate-dependent aminotransferase family. BioF subfamily. As to quaternary structure, homodimer. It depends on pyridoxal 5'-phosphate as a cofactor.

It catalyses the reaction 6-carboxyhexanoyl-[ACP] + L-alanine + H(+) = (8S)-8-amino-7-oxononanoate + holo-[ACP] + CO2. It participates in cofactor biosynthesis; biotin biosynthesis. Catalyzes the decarboxylative condensation of pimeloyl-[acyl-carrier protein] and L-alanine to produce 8-amino-7-oxononanoate (AON), [acyl-carrier protein], and carbon dioxide. The protein is 8-amino-7-oxononanoate synthase of Petrotoga mobilis (strain DSM 10674 / SJ95).